The sequence spans 182 residues: UPF0397 protein BA_2640/GBAA_2640/BAS2460 (182 aa).

5 helical membrane passes run 9–29 (VVAI…GFSI), 40–60 (AILT…IGLI), 71–91 (WSIW…MGFI), 114–134 (ITGL…DIIV), and 142–162 (IVIQ…VLGL).

This sequence belongs to the UPF0397 family.

The protein resides in the cell membrane. This Bacillus anthracis protein is UPF0397 protein BA_2640/GBAA_2640/BAS2460.